The sequence spans 407 residues: Phosphonoacetate hydrolase (407 aa).

Zn(2+) contacts are provided by Asp25, Thr64, Asp202, His206, Asp241, His242, and His368. Substrate-binding residues include Thr64 and Asp202. Positions 242 and 368 each coordinate substrate.

It belongs to the alkaline phosphatase family. PhnA subfamily. In terms of assembly, homodimer. Zn(2+) serves as cofactor.

The catalysed reaction is phosphonoacetate + H2O = acetate + phosphate + H(+). Specifically hydrolyzes phosphonoacetate. Does not have activity on other organophosphonates or acetates. The polypeptide is Phosphonoacetate hydrolase (Pseudomonas cedrina).